We begin with the raw amino-acid sequence, 585 residues long: Bifunctional purine biosynthesis protein ade10 (585 aa).

The region spanning 1-142 is the MGS-like domain; that stretch reads MYALLSVYDK…KNHARVTILS (142 aa). Residues 30–33, 60–63, 97–98, and 121–122 each bind IMP; these read SGGT, RVKT, CN, and DI. K133 serves as the catalytic Proton donor/acceptor; for FAICAR cyclization activity. 5-amino-1-(5-phospho-beta-D-ribosyl)imidazole-4-carboxamide is bound by residues 200–201, H260, G308, D331, N423, and R443; that span reads RY. The active-site Proton acceptor; for AICAR formyltransferase activity is the H260. I444 is a (6R)-10-formyltetrahydrofolate binding site. 5-amino-1-(5-phospho-beta-D-ribosyl)imidazole-4-carboxamide is bound at residue F534. (6R)-10-formyltetrahydrofolate is bound by residues D539 and 558-559; that span reads SV. R581 is a 5-amino-1-(5-phospho-beta-D-ribosyl)imidazole-4-carboxamide binding site.

This sequence belongs to the PurH family. In terms of assembly, homodimer.

It is found in the cytoplasm. The protein resides in the cytosol. The catalysed reaction is (6R)-10-formyltetrahydrofolate + 5-amino-1-(5-phospho-beta-D-ribosyl)imidazole-4-carboxamide = 5-formamido-1-(5-phospho-D-ribosyl)imidazole-4-carboxamide + (6S)-5,6,7,8-tetrahydrofolate. The enzyme catalyses IMP + H2O = 5-formamido-1-(5-phospho-D-ribosyl)imidazole-4-carboxamide. It functions in the pathway purine metabolism; IMP biosynthesis via de novo pathway; 5-formamido-1-(5-phospho-D-ribosyl)imidazole-4-carboxamide from 5-amino-1-(5-phospho-D-ribosyl)imidazole-4-carboxamide (10-formyl THF route): step 1/1. The protein operates within purine metabolism; IMP biosynthesis via de novo pathway; IMP from 5-formamido-1-(5-phospho-D-ribosyl)imidazole-4-carboxamide: step 1/1. Functionally, bifunctional enzyme that catalyzes the last two steps of purine biosynthesis. Acts as a transformylase that incorporates a formyl group to the AMP analog AICAR (5-amino-1-(5-phospho-beta-D-ribosyl)imidazole-4-carboxamide) to produce the intermediate formyl-AICAR (FAICAR). Also catalyzes the cyclization of FAICAR to IMP. The polypeptide is Bifunctional purine biosynthesis protein ade10 (ade10) (Schizosaccharomyces pombe (strain 972 / ATCC 24843) (Fission yeast)).